The primary structure comprises 438 residues: V-type ATP synthase beta chain (438 aa).

The protein belongs to the ATPase alpha/beta chains family.

Functionally, produces ATP from ADP in the presence of a proton gradient across the membrane. The V-type beta chain is a regulatory subunit. In Chlamydia felis (strain Fe/C-56) (Chlamydophila felis), this protein is V-type ATP synthase beta chain.